The chain runs to 270 residues: 4-hydroxy-tetrahydrodipicolinate reductase (270 aa).

Residues 11-16 (GAGGRM) and Glu37 contribute to the NAD(+) site. Arg38 lines the NADP(+) pocket. NAD(+) contacts are provided by residues 101 to 103 (GTT) and 125 to 128 (APNM). The Proton donor/acceptor role is filled by His158. A (S)-2,3,4,5-tetrahydrodipicolinate-binding site is contributed by His159. Lys162 acts as the Proton donor in catalysis. 168-169 (GT) contacts (S)-2,3,4,5-tetrahydrodipicolinate.

It belongs to the DapB family.

It is found in the cytoplasm. It carries out the reaction (S)-2,3,4,5-tetrahydrodipicolinate + NAD(+) + H2O = (2S,4S)-4-hydroxy-2,3,4,5-tetrahydrodipicolinate + NADH + H(+). The catalysed reaction is (S)-2,3,4,5-tetrahydrodipicolinate + NADP(+) + H2O = (2S,4S)-4-hydroxy-2,3,4,5-tetrahydrodipicolinate + NADPH + H(+). It functions in the pathway amino-acid biosynthesis; L-lysine biosynthesis via DAP pathway; (S)-tetrahydrodipicolinate from L-aspartate: step 4/4. Its function is as follows. Catalyzes the conversion of 4-hydroxy-tetrahydrodipicolinate (HTPA) to tetrahydrodipicolinate. This chain is 4-hydroxy-tetrahydrodipicolinate reductase, found in Shewanella sp. (strain ANA-3).